A 568-amino-acid polypeptide reads, in one-letter code: Probable pectinesterase/pectinesterase inhibitor 23 (568 aa).

The signal sequence occupies residues 1-33; that stretch reads MGSDGDKKKKFIVAGSVSGFLVIMVVSVAVVTS. Residues 45 to 198 form a pectinesterase inhibitor 23 region; that stretch reads RKTTKAVQAV…RELSSNSLAM (154 aa). N-linked (GlcNAc...) asparagine glycans are attached at residues Asn-94, Asn-210, and Asn-316. The segment at 251–548 is pectinesterase 23; the sequence is PGPVKANAVV…PQDALLYTGD (298 aa). Positions 333 and 363 each coordinate substrate. Asp-386 (proton donor; for pectinesterase activity) is an active-site residue. Cysteines 400 and 420 form a disulfide. Asp-407 (nucleophile; for pectinesterase activity) is an active-site residue. The substrate site is built by Arg-475 and Trp-477.

This sequence in the N-terminal section; belongs to the PMEI family. It in the C-terminal section; belongs to the pectinesterase family. In terms of tissue distribution, expressed in mature pollen grains in the anthers and on the stigma. Found in pollen tubes within the style.

Its subcellular location is the secreted. The protein localises to the cell wall. The catalysed reaction is [(1-&gt;4)-alpha-D-galacturonosyl methyl ester](n) + n H2O = [(1-&gt;4)-alpha-D-galacturonosyl](n) + n methanol + n H(+). The protein operates within glycan metabolism; pectin degradation; 2-dehydro-3-deoxy-D-gluconate from pectin: step 1/5. In terms of biological role, acts in the modification of cell walls via demethylesterification of cell wall pectin. The polypeptide is Probable pectinesterase/pectinesterase inhibitor 23 (PME23) (Arabidopsis thaliana (Mouse-ear cress)).